We begin with the raw amino-acid sequence, 345 residues long: Acetylserotonin O-methyltransferase (345 aa).

Residues Y147, W164, D210, 235-237 (GDF), and R252 contribute to the S-adenosyl-L-methionine site. H255 acts as the Proton donor/acceptor in catalysis. 3 residues coordinate substrate: D256, N302, and Q306.

The protein belongs to the class I-like SAM-binding methyltransferase superfamily. Cation-independent O-methyltransferase family. Homodimer. Expressed in the pineal gland (at protein level). Not detectable in retina, nor in liver.

It catalyses the reaction N-acetylserotonin + S-adenosyl-L-methionine = melatonin + S-adenosyl-L-homocysteine + H(+). It participates in aromatic compound metabolism; melatonin biosynthesis; melatonin from serotonin: step 1/2. Functionally, catalyzes the transfer of a methyl group onto N-acetylserotonin, producing melatonin (N-acetyl-5-methoxytryptamine). The protein is Acetylserotonin O-methyltransferase (ASMT) of Bos taurus (Bovine).